The following is a 506-amino-acid chain: Photosystem II CP47 reaction center protein (506 aa).

6 helical membrane-spanning segments follow: residues 21–36, 101–115, 140–156, 203–218, 237–252, and 457–472; these read SVHI…WAGS, ILFS…IWHW, GIHL…FGAF, IAAG…FHLS, VLSS…AFVV, and SFAL…HGAR.

This sequence belongs to the PsbB/PsbC family. PsbB subfamily. As to quaternary structure, PSII is composed of 1 copy each of membrane proteins PsbA, PsbB, PsbC, PsbD, PsbE, PsbF, PsbH, PsbI, PsbJ, PsbK, PsbL, PsbM, PsbT, PsbX, PsbY, PsbZ, Psb30/Ycf12, at least 3 peripheral proteins of the oxygen-evolving complex and a large number of cofactors. It forms dimeric complexes. Binds multiple chlorophylls. PSII binds additional chlorophylls, carotenoids and specific lipids. serves as cofactor.

It is found in the plastid. Its subcellular location is the chloroplast thylakoid membrane. Its function is as follows. One of the components of the core complex of photosystem II (PSII). It binds chlorophyll and helps catalyze the primary light-induced photochemical processes of PSII. PSII is a light-driven water:plastoquinone oxidoreductase, using light energy to abstract electrons from H(2)O, generating O(2) and a proton gradient subsequently used for ATP formation. This chain is Photosystem II CP47 reaction center protein, found in Cucumis sativus (Cucumber).